The primary structure comprises 689 residues: tRNA 5-methylaminomethyl-2-thiouridine biosynthesis bifunctional protein MnmC (689 aa).

Residues 1–245 (MNQRPIQTAT…KREMLTGTLP (245 aa)) are tRNA (mnm(5)s(2)U34)-methyltransferase. An FAD-dependent cmnm(5)s(2)U34 oxidoreductase region spans residues 270–689 (IGGGIVSALT…RSPATQESSR (420 aa)).

In the N-terminal section; belongs to the methyltransferase superfamily. tRNA (mnm(5)s(2)U34)-methyltransferase family. This sequence in the C-terminal section; belongs to the DAO family. FAD is required as a cofactor.

It localises to the cytoplasm. It carries out the reaction 5-aminomethyl-2-thiouridine(34) in tRNA + S-adenosyl-L-methionine = 5-methylaminomethyl-2-thiouridine(34) in tRNA + S-adenosyl-L-homocysteine + H(+). Its function is as follows. Catalyzes the last two steps in the biosynthesis of 5-methylaminomethyl-2-thiouridine (mnm(5)s(2)U) at the wobble position (U34) in tRNA. Catalyzes the FAD-dependent demodification of cmnm(5)s(2)U34 to nm(5)s(2)U34, followed by the transfer of a methyl group from S-adenosyl-L-methionine to nm(5)s(2)U34, to form mnm(5)s(2)U34. The sequence is that of tRNA 5-methylaminomethyl-2-thiouridine biosynthesis bifunctional protein MnmC from Yersinia pestis.